The sequence spans 545 residues: Hsk1-interacting molecule 1 (545 aa).

A DBF4-type zinc finger spans residues 492–541 (VDAKPGYCENCREKFDNFESHIRSSRHRRFAENNDNFKDLDELFALVQRP). Zn(2+)-binding residues include Cys499, Cys502, His512, and His518.

As to quaternary structure, associates with hsk1. Interacts with mcm10. In terms of processing, hyperphosphorylated at the G1/S and S-phases of the cell cycle.

The protein localises to the nucleus. Its function is as follows. Activates hsk1 kinase and is essential for G1/S transition. Has a role in S-phase checkpoint control induced by replication fork blocks after nucleotide deprivation and DNA damage. The chain is Hsk1-interacting molecule 1 (him1) from Schizosaccharomyces pombe (strain 972 / ATCC 24843) (Fission yeast).